We begin with the raw amino-acid sequence, 181 residues long: Ninjurin-B (181 aa).

Over residues 1-10 (MDSGEVKISL) the composition is skewed to basic and acidic residues. The tract at residues 1–72 (MDSGEVKISL…SNKKCSSDLS (72 aa)) is disordered. At 1–115 (MDSGEVKISL…YNDKASTYIY (115 aa)) the chain is on the extracellular side. Positions 12-26 (DSPSSGESFASTTSG) are enriched in polar residues. The segment covering 33 to 49 (RDLDIQVHESHIKDDQF) has biased composition (basic and acidic residues). Positions 80 to 91 (NKNVAEGLMDIA) are helix alpha1. The tract at residues 94–110 (SANANQLRFLITYNDKA) is helix alpha2. Residues 116-136 (SMIMVILSLVLQLLVGIMLIF) form a helical membrane-spanning segment. Residues 137–153 (KRRLKRFRNRSYERTND) are Cytoplasmic-facing. A helical membrane pass occupies residues 154–174 (LLVMGVFMITVINILLAAFTT). At 175–181 (TDGGGSH) the chain is on the extracellular side.

The protein belongs to the ninjurin family.

The protein resides in the membrane. Its function is as follows. Effector of non-apoptotic necrotic cell death that mediates plasma membrane rupture (cytolysis): oligomerizes in response to death stimuli and promotes plasma membrane rupture by introducing hydrophilic faces of 2 alpha helices into the hydrophobic membrane, leading to release intracellular molecules that propagate the inflammatory response. Also acts as a homophilic transmembrane adhesion molecule that promotes cell adhesion by mediating homophilic interactions via its extracellular region. The sequence is that of Ninjurin-B from Drosophila melanogaster (Fruit fly).